The chain runs to 154 residues: Ribonuclease H (154 aa).

Residues 1–142 (MRKQVEIFTD…CDELARAAAS (142 aa)) form the RNase H type-1 domain. 4 residues coordinate Mg(2+): D10, E48, D70, and D134.

Belongs to the RNase H family. Monomer. It depends on Mg(2+) as a cofactor.

Its subcellular location is the cytoplasm. It catalyses the reaction Endonucleolytic cleavage to 5'-phosphomonoester.. Functionally, endonuclease that specifically degrades the RNA of RNA-DNA hybrids. The protein is Ribonuclease H of Pectobacterium atrosepticum (strain SCRI 1043 / ATCC BAA-672) (Erwinia carotovora subsp. atroseptica).